Reading from the N-terminus, the 155-residue chain is Ribonuclease H (155 aa).

Residues Asp-5 to Thr-146 enclose the RNase H type-1 domain. Positions 14, 52, 74, and 138 each coordinate Mg(2+). Positions Glu-133–Lys-155 are disordered.

This sequence belongs to the RNase H family. In terms of assembly, monomer. It depends on Mg(2+) as a cofactor.

The protein resides in the cytoplasm. It catalyses the reaction Endonucleolytic cleavage to 5'-phosphomonoester.. In terms of biological role, endonuclease that specifically degrades the RNA of RNA-DNA hybrids. This is Ribonuclease H from Rhodopseudomonas palustris (strain ATCC BAA-98 / CGA009).